We begin with the raw amino-acid sequence, 130 residues long: Small ribosomal subunit protein uS9 (130 aa).

The protein belongs to the universal ribosomal protein uS9 family.

The chain is Small ribosomal subunit protein uS9 from Aeromonas salmonicida (strain A449).